The primary structure comprises 265 residues: Capsule polysaccharide export inner-membrane protein BexB (265 aa).

The next 6 membrane-spanning stretches (helical) occupy residues 37–57 (IGFLWLFVEPLLMTFFIVMMW), 64–84 (KFSTLNMIAFVMTGYPMAMMW), 121–141 (VAGASIAQILFMAVLVLIGWI), 148–168 (FYMLMAWFLMAMFAFALGLII), 178–198 (FGKIWGTLSFVLLPISGAFFF), and 235–255 (ESIGFLVVSDLALLLMGLVMV). One can recognise an ABC transmembrane type-2 domain in the interval 37-258 (IGFLWLFVEP…LMGLVMVKNF (222 aa)).

It belongs to the ABC-2 integral membrane protein family.

It localises to the cell inner membrane. May form an ATP-driven capsule polysaccharide export apparatus, in association with the BexA, BexC and BexD proteins. This is Capsule polysaccharide export inner-membrane protein BexB (bexB) from Haemophilus influenzae.